The following is a 318-amino-acid chain: RNA polymerase II transcription factor B subunit 3 (318 aa).

The RING-type zinc finger occupies 13–54 (CPLCQADRYLNPNMKLLINPECYHKMCESCVDRIFTTGPAQC).

One of the nine subunits forming the core-TFIIH basal transcription factor. Also interacts with skp1 and with the mcs2-mcs6 complex.

Its subcellular location is the cytoplasm. It localises to the nucleus. Acts as a component of the general transcription and DNA repair factor IIH (TFIIH or factor B), which is essential for both basal and activated transcription, and is involved in nucleotide excision repair (NER) of damaged DNA. TFIIH has CTD kinase activity and DNA-dependent ATPase activity, and is essential for polymerase II transcription. The chain is RNA polymerase II transcription factor B subunit 3 (pmh1) from Schizosaccharomyces pombe (strain 972 / ATCC 24843) (Fission yeast).